We begin with the raw amino-acid sequence, 89 residues long: Small ribosomal subunit protein uS15 (89 aa).

It belongs to the universal ribosomal protein uS15 family. Part of the 30S ribosomal subunit. Forms a bridge to the 50S subunit in the 70S ribosome, contacting the 23S rRNA.

Its function is as follows. One of the primary rRNA binding proteins, it binds directly to 16S rRNA where it helps nucleate assembly of the platform of the 30S subunit by binding and bridging several RNA helices of the 16S rRNA. In terms of biological role, forms an intersubunit bridge (bridge B4) with the 23S rRNA of the 50S subunit in the ribosome. The protein is Small ribosomal subunit protein uS15 of Actinobacillus pleuropneumoniae serotype 5b (strain L20).